Here is a 488-residue protein sequence, read N- to C-terminus: Probable aldehyde dehydrogenase (488 aa).

Residue 240–245 (GSSVTG) coordinates NAD(+). Active-site residues include Glu262 and Cys296.

It belongs to the aldehyde dehydrogenase family.

The enzyme catalyses an aldehyde + NAD(+) + H2O = a carboxylate + NADH + 2 H(+). In terms of biological role, involved in an alpha-terpineol oxidation system. The protein is Probable aldehyde dehydrogenase (terPE) of Pseudomonas sp.